Here is a 399-residue protein sequence, read N- to C-terminus: Acetylornithine aminotransferase (399 aa).

Residues 99–100 and phenylalanine 132 contribute to the pyridoxal 5'-phosphate site; that span reads GA. Arginine 135 is a binding site for N(2)-acetyl-L-ornithine. Residue 217–220 participates in pyridoxal 5'-phosphate binding; that stretch reads DEVQ. Position 246 is an N6-(pyridoxal phosphate)lysine (lysine 246). A N(2)-acetyl-L-ornithine-binding site is contributed by threonine 274. Threonine 275 lines the pyridoxal 5'-phosphate pocket.

The protein belongs to the class-III pyridoxal-phosphate-dependent aminotransferase family. ArgD subfamily. Homodimer. Pyridoxal 5'-phosphate is required as a cofactor.

Its subcellular location is the cytoplasm. It catalyses the reaction N(2)-acetyl-L-ornithine + 2-oxoglutarate = N-acetyl-L-glutamate 5-semialdehyde + L-glutamate. The protein operates within amino-acid biosynthesis; L-arginine biosynthesis; N(2)-acetyl-L-ornithine from L-glutamate: step 4/4. The protein is Acetylornithine aminotransferase of Agrobacterium fabrum (strain C58 / ATCC 33970) (Agrobacterium tumefaciens (strain C58)).